The following is a 291-amino-acid chain: MMKVYFIGTGGGAPSRRGLPAYLVRREGLSILMDCGEGTQITMIRNSLNIMNVNVIAITHLHADHVLGLPSLIQTMGMYDRKERLYILGPEGLKDLLTETFERTYFSPNFPIEFVSSYESQGIRVRPFRTCHVVPSQGYLVEEKDTANLDAERLRREGVTDWRVMRMLKEGKEVPWGDRVLKPEDYLIVKRGIRIAYTGDTRPCETVINSVKGVDLLLHDSTFEQGIDASEYGHSTSTEAATVAREAEVKRLALIHISARYRDTSEMLKQARRIFPMSFVPEDLSFLNLRA.

Zn(2+) is bound by residues His60, His62, Asp64, His65, His132, Asp200, and His256. Residue Asp64 is the Proton acceptor of the active site.

This sequence belongs to the RNase Z family. Homodimer. Zn(2+) is required as a cofactor.

It carries out the reaction Endonucleolytic cleavage of RNA, removing extra 3' nucleotides from tRNA precursor, generating 3' termini of tRNAs. A 3'-hydroxy group is left at the tRNA terminus and a 5'-phosphoryl group is left at the trailer molecule.. Its function is as follows. Zinc phosphodiesterase, which displays some tRNA 3'-processing endonuclease activity. Probably involved in tRNA maturation, by removing a 3'-trailer from precursor tRNA. The sequence is that of Ribonuclease Z from Metallosphaera sedula (strain ATCC 51363 / DSM 5348 / JCM 9185 / NBRC 15509 / TH2).